The following is a 704-amino-acid chain: CAP-Gly domain-containing linker protein 4 (704 aa).

ANK repeat units lie at residues 65-101 (TSVSELFAILRQWVPQVQQNIDIIGNEILKRGCNVND), 149-180 (TNMNALHYASYFDVPELIRVILKTSKPKDVDA), and 186-215 (NFGTALHIAAHNLCAGAVKTLLELGANPAF). Positions 303–345 (GTTEFASGQWAGIELDEPEGKNNGSVGRVQYFKCAPKYGIFAP) constitute a CAP-Gly 1 domain. The interval 353 to 479 (KDGRKTTTHT…SATSAANNSH (127 aa)) is disordered. Low complexity-rich tracts occupy residues 360–371 (THTPSTRATPHA), 423–432 (SMSSSSSSSS), and 440–461 (PKKLTTSSGGKKTLSKSPSLPS). Residues 504-546 (GTTNFAPGYWYGIELEKPHGKNDGSVGGVQYFSCSPRYGIFAP) enclose the CAP-Gly 2 domain. Ser556 and Ser608 each carry phosphoserine. The 43-residue stretch at 643-685 (GPTDFASGIWLGLELRSAKGKNDGAVGDKRYFTCKPNYGVLVR) folds into the CAP-Gly 3 domain.

The chain is CAP-Gly domain-containing linker protein 4 (Clip4) from Mus musculus (Mouse).